The following is a 271-amino-acid chain: Putative phosphoenolpyruvate synthase regulatory protein (271 aa).

152–159 (GASRSGKT) is a binding site for ADP.

This sequence belongs to the pyruvate, phosphate/water dikinase regulatory protein family. PSRP subfamily.

The enzyme catalyses [pyruvate, water dikinase] + ADP = [pyruvate, water dikinase]-phosphate + AMP + H(+). It carries out the reaction [pyruvate, water dikinase]-phosphate + phosphate + H(+) = [pyruvate, water dikinase] + diphosphate. In terms of biological role, bifunctional serine/threonine kinase and phosphorylase involved in the regulation of the phosphoenolpyruvate synthase (PEPS) by catalyzing its phosphorylation/dephosphorylation. This chain is Putative phosphoenolpyruvate synthase regulatory protein, found in Marinobacter nauticus (strain ATCC 700491 / DSM 11845 / VT8) (Marinobacter aquaeolei).